The sequence spans 366 residues: Chorismate synthase (366 aa).

Position 48 (Arg48) interacts with NADP(+). Residues 125-127 (RSS), 238-239 (NA), Gly278, 293-297 (KPTSS), and Arg319 each bind FMN.

This sequence belongs to the chorismate synthase family. In terms of assembly, homotetramer. FMNH2 serves as cofactor.

The catalysed reaction is 5-O-(1-carboxyvinyl)-3-phosphoshikimate = chorismate + phosphate. It participates in metabolic intermediate biosynthesis; chorismate biosynthesis; chorismate from D-erythrose 4-phosphate and phosphoenolpyruvate: step 7/7. In terms of biological role, catalyzes the anti-1,4-elimination of the C-3 phosphate and the C-6 proR hydrogen from 5-enolpyruvylshikimate-3-phosphate (EPSP) to yield chorismate, which is the branch point compound that serves as the starting substrate for the three terminal pathways of aromatic amino acid biosynthesis. This reaction introduces a second double bond into the aromatic ring system. The polypeptide is Chorismate synthase (Hydrogenovibrio crunogenus (strain DSM 25203 / XCL-2) (Thiomicrospira crunogena)).